The following is a 178-amino-acid chain: ATP synthase subunit b (178 aa).

The helical transmembrane segment at 19–39 (ITGIGFVILLFIAIKYIVPAF) threads the bilayer.

The protein belongs to the ATPase B chain family. F-type ATPases have 2 components, F(1) - the catalytic core - and F(0) - the membrane proton channel. F(1) has five subunits: alpha(3), beta(3), gamma(1), delta(1), epsilon(1). F(0) has three main subunits: a(1), b(2) and c(10-14). The alpha and beta chains form an alternating ring which encloses part of the gamma chain. F(1) is attached to F(0) by a central stalk formed by the gamma and epsilon chains, while a peripheral stalk is formed by the delta and b chains.

Its subcellular location is the cell membrane. F(1)F(0) ATP synthase produces ATP from ADP in the presence of a proton or sodium gradient. F-type ATPases consist of two structural domains, F(1) containing the extramembraneous catalytic core and F(0) containing the membrane proton channel, linked together by a central stalk and a peripheral stalk. During catalysis, ATP synthesis in the catalytic domain of F(1) is coupled via a rotary mechanism of the central stalk subunits to proton translocation. Its function is as follows. Component of the F(0) channel, it forms part of the peripheral stalk, linking F(1) to F(0). The polypeptide is ATP synthase subunit b (Kocuria rhizophila (strain ATCC 9341 / DSM 348 / NBRC 103217 / DC2201)).